The chain runs to 206 residues: Large ribosomal subunit protein uL4 (206 aa).

The protein belongs to the universal ribosomal protein uL4 family. In terms of assembly, part of the 50S ribosomal subunit.

In terms of biological role, one of the primary rRNA binding proteins, this protein initially binds near the 5'-end of the 23S rRNA. It is important during the early stages of 50S assembly. It makes multiple contacts with different domains of the 23S rRNA in the assembled 50S subunit and ribosome. Forms part of the polypeptide exit tunnel. This chain is Large ribosomal subunit protein uL4, found in Nitratidesulfovibrio vulgaris (strain ATCC 29579 / DSM 644 / CCUG 34227 / NCIMB 8303 / VKM B-1760 / Hildenborough) (Desulfovibrio vulgaris).